The primary structure comprises 970 residues: GEM-interacting protein (970 aa).

A Phosphoserine modification is found at S19. Disordered stretches follow at residues 44-76 (PLLS…EGPV), 224-263 (SEDL…AQAK), and 377-478 (PLDI…ENGL). Over residues 56–65 (PTATVTNEAS) the composition is skewed to polar residues. Phosphoserine occurs at positions 71, 231, 234, 243, 437, and 441. The region spanning 81–344 (EELDLRLIRT…CCAPFEPGQR (264 aa)) is the F-BAR domain. Residues 231–246 (SQGSPEDSAPQASPGP) are compositionally biased toward polar residues. Residues 459 to 472 (SSDDFEERDPDLGD) are compositionally biased toward acidic residues. The Phorbol-ester/DAG-type zinc-finger motif lies at 493–537 (THQLRRLRGPAKCRECEAFMVSGTECEECFLTCHKRCLETLLILC). The 204-residue stretch at 554 to 757 (LQLPRDFPEE…FLIVHYEQIF (204 aa)) folds into the Rho-GAP domain. T660 carries the post-translational modification Phosphothreonine. Positions 762-878 (LPQATEPPPQ…PVKYPRGGVR (117 aa)) are disordered. A compositionally biased stretch (pro residues) spans 766–778 (TEPPPQDSSPAPG). Residues 815-830 (EQHPTATPTEIPTPQS) are compositionally biased toward polar residues. Residues 831–844 (DQREDVAEDTKDGG) are compositionally biased toward basic and acidic residues. Over residues 847–863 (VSSQGPEDSLLGTQSRG) the composition is skewed to polar residues. 5 positions are modified to phosphoserine: S885, S907, S914, S919, and S923. The interval 897 to 932 (ETPITSVPRGSLRGRGPSPAAASPEGSPLRRTPLPK) is disordered. Positions 910 to 923 (GRGPSPAAASPEGS) are enriched in low complexity.

Interacts with GEM through its N-terminal.

Stimulates, in vitro and in vivo, the GTPase activity of RhoA. In Homo sapiens (Human), this protein is GEM-interacting protein (GMIP).